Consider the following 252-residue polypeptide: MRVLQLPALRDNYIYLLHNPDTATAAVVDPAVAEPVLEKLAELGAELVAIFNTHHHHDHVGGNRQLLERYPRARVYGSQVDRGRIPGQTVELKAGETVEFAGRLAKVLFVPGHTRGHIAYYFSESGDLFCGDTLFAGGCGRLFEGTPEQMVGSLDQLRQLPEATRVWCAHEYTLNNLRFALTVDGDNPDLQARYQQVAALRQTGSPTVPSTIGEERRTNPFLRWDQPALQAATGLQDPVRVFARLRGMKDQF.

His54, His56, Asp58, His59, His113, Asp132, and His170 together coordinate Zn(2+).

The protein belongs to the metallo-beta-lactamase superfamily. Glyoxalase II family. Monomer. Zn(2+) serves as cofactor.

It carries out the reaction an S-(2-hydroxyacyl)glutathione + H2O = a 2-hydroxy carboxylate + glutathione + H(+). It participates in secondary metabolite metabolism; methylglyoxal degradation; (R)-lactate from methylglyoxal: step 2/2. Thiolesterase that catalyzes the hydrolysis of S-D-lactoyl-glutathione to form glutathione and D-lactic acid. This chain is Hydroxyacylglutathione hydrolase, found in Synechococcus sp. (strain JA-2-3B'a(2-13)) (Cyanobacteria bacterium Yellowstone B-Prime).